Consider the following 192-residue polypeptide: Phosphoheptose isomerase (192 aa).

An SIS domain is found at 34 to 192 (VVDAYKAGNK…VERELFVKGK (159 aa)). 49–51 (NGG) is a substrate binding site. Zn(2+)-binding residues include histidine 58 and glutamate 62. Substrate contacts are provided by residues glutamate 62, 91–92 (ND), 117–119 (STS), serine 122, and glutamine 169. Zn(2+)-binding residues include glutamine 169 and histidine 177.

Belongs to the SIS family. GmhA subfamily. Homotetramer. Requires Zn(2+) as cofactor.

Its subcellular location is the cytoplasm. It carries out the reaction 2 D-sedoheptulose 7-phosphate = D-glycero-alpha-D-manno-heptose 7-phosphate + D-glycero-beta-D-manno-heptose 7-phosphate. The protein operates within carbohydrate biosynthesis; D-glycero-D-manno-heptose 7-phosphate biosynthesis; D-glycero-alpha-D-manno-heptose 7-phosphate and D-glycero-beta-D-manno-heptose 7-phosphate from sedoheptulose 7-phosphate: step 1/1. In terms of biological role, catalyzes the isomerization of sedoheptulose 7-phosphate in D-glycero-D-manno-heptose 7-phosphate. This is Phosphoheptose isomerase from Citrifermentans bemidjiense (strain ATCC BAA-1014 / DSM 16622 / JCM 12645 / Bem) (Geobacter bemidjiensis).